Consider the following 114-residue polypeptide: MGSPPCALGLFCCCSSCFCLCCPRHRPVSRLAAVVGGAAAVPAVVSGVTGLILSPSQSPIFIQPTPLPQTLPLRPGLDLAFANQPGHLAPLGEIRPSAPPLPPVADLPQPGLRR.

2 hydrophobic regions span residues 6 to 22 (CALG…CLCC) and 33 to 53 (AVVG…GLIL). Positions 28–68 (VSRLAAVVGGAAAVPAVVSGVTGLILSPSQSPIFIQPTPLP) are interaction with host HPX. Residues 72–114 (PLRPGLDLAFANQPGHLAPLGEIRPSAPPLPPVADLPQPGLRR) are homodimerization, and interaction with host AMBP/bikunin. The disordered stretch occupies residues 91 to 114 (LGEIRPSAPPLPPVADLPQPGLRR). The segment at 95 to 104 (RPSAPPLPPV) is interaction with host SRC, HCK, FYN, PIK3R3 and GRB2. A PTAP/PSAP motif motif is present at residues 96 to 99 (PSAP).

Belongs to the hepevirus ORF3 protein family. Forms homooligomers. Interacts with host SRC, HCK, FYN, PIK3R3 and GRB2 (via SH3 domain); binding does not activate the kinases. Interacts with host AMBP/bikunin and AMBP/alpha-1-microglobulin peptides. Interacts with host HPX/hemopexin. Interacts (when phosphorylated) with capsid protein ORF2. Interacts with host TSG101; this interaction plays a role in viral release from the host cell. Interacts with host SIRPA; this interaction down-regulates the phosphorylation of host IRF3. Palmitoylated in the N-terminus.

The protein localises to the host endoplasmic reticulum membrane. The protein resides in the host cytoplasm. It localises to the host cytoskeleton. It is found in the virion. Its subcellular location is the host cell membrane. Small multifunctional phosphoprotein involved in virion morphogenesis, egress and counteracting host innate immunity. Plays critical roles in the final steps of viral release by interacting with host TSG101, a member of the vacuolar protein-sorting pathway and using other cellular host proteins involved in vesicle formation pathway. Also acts as a viroporin and forms ion conductive pores allowing viral particle release. Impairs the generation of type I interferon by down-regulating host TLR3 and TLR7 as well as their downstream signaling pathways. Down-regulates the phosphorylation of host IRF3 via the interaction with host SIRP-alpha, thereby inhibiting IFN-I expression. Interacts with host microtubules. The protein is Protein ORF3 of Hepatitis E virus genotype 2 (isolate Human/Mexico) (HEV-2).